The following is a 385-amino-acid chain: Glucans biosynthesis protein C (385 aa).

10 helical membrane-spanning segments follow: residues 17 to 37 (AWLMLLGIPFHISLIYSSHTW), 60 to 80 (MLVFFVISGYFSYMLFLRYPL), 91 to 111 (VGIPMLTAIPLLTLPQFIMLQ), 137 to 157 (ISHLWFLLVLVVMTTLCVWIF), 173 to 193 (KFSMVKLSVIFLCLGIGYAVI), 212 to 232 (FIVMQTLFYLPFFILGALAFI), 239 to 259 (LFTTPSRGCTLAAALAFVAYL), 274 to 294 (TESVITMVLGLWMVNVVFSFG), 311 to 331 (ASLFIYLVHHPLTLFFGAYIT), and 338 to 358 (WLGFLCGLIFVVGIAIILYEI).

This sequence belongs to the acyltransferase 3 family. OpgC subfamily.

Its subcellular location is the cell membrane. The protein operates within glycan metabolism; osmoregulated periplasmic glucan (OPG) biosynthesis. Its function is as follows. Necessary for the succinyl substitution of periplasmic glucans. Could catalyze the transfer of succinyl residues from the cytoplasmic side of the membrane to the nascent glucan backbones on the periplasmic side of the membrane. This Shigella boydii serotype 4 (strain Sb227) protein is Glucans biosynthesis protein C.